A 147-amino-acid chain; its full sequence is Hemoglobin subunit epsilon (147 aa).

Residues 3-147 (HFTAEEKAAI…VAIALGHKYH (145 aa)) enclose the Globin domain. Phosphoserine is present on residues serine 14 and serine 51. Heme b is bound by residues histidine 64 and histidine 93.

It belongs to the globin family. Heterotetramer of two alpha chains and two epsilon chains in early embryonic hemoglobin Gower-2; two zeta chains and two epsilon chains in early embryonic hemoglobin Gower-1. As to expression, red blood cells.

In terms of biological role, the epsilon chain is a beta-type chain of early mammalian embryonic hemoglobin. This chain is Hemoglobin subunit epsilon (HBE1), found in Saimiri boliviensis boliviensis (Bolivian squirrel monkey).